The chain runs to 354 residues: GTPase Obg (354 aa).

One can recognise an Obg domain in the interval 1–159; the sequence is MKFLDQCKIY…LWVWLRLKLI (159 aa). The region spanning 160-328 is the OBG-type G domain; the sequence is ADVGLVGLPN…LLRAAFTQVR (169 aa). GTP-binding positions include 166-173, 191-195, 213-216, 280-283, and 309-311; these read GLPNAGKS, FTTLT, DIPG, NKVD, and SGV. The Mg(2+) site is built by S173 and T193. Residues 333-354 are disordered; sequence ETPAEAAIDEAPEEETPGGWQP. Acidic residues predominate over residues 339-348; the sequence is AIDEAPEEET.

This sequence belongs to the TRAFAC class OBG-HflX-like GTPase superfamily. OBG GTPase family. Monomer. It depends on Mg(2+) as a cofactor.

It localises to the cytoplasm. In terms of biological role, an essential GTPase which binds GTP, GDP and possibly (p)ppGpp with moderate affinity, with high nucleotide exchange rates and a fairly low GTP hydrolysis rate. Plays a role in control of the cell cycle, stress response, ribosome biogenesis and in those bacteria that undergo differentiation, in morphogenesis control. The chain is GTPase Obg from Caulobacter sp. (strain K31).